An 83-amino-acid chain; its full sequence is Mu-theraphotoxin-Hhn2i (83 aa).

Residues 1–21 (MKASMFLALAGLVLLFVVGYA) form the signal peptide. The propeptide occupies 22–48 (SESEEKEFPRELLSKIFAVDDFKGEER). 3 disulfides stabilise this stretch: Cys50–Cys65, Cys57–Cys70, and Cys64–Cys77. Leu81 carries the leucine amide modification.

This sequence belongs to the neurotoxin 10 (Hwtx-1) family. 15 (Hntx-3) subfamily. As to quaternary structure, monomer. As to expression, expressed by the venom gland.

The protein localises to the secreted. Lethal neurotoxin. Selectively blocks tetrodotoxin-sensitive voltage-gated sodium channels (Nav). Does not affect tetrodotoxin-resistant voltage-gated sodium channels or calcium channels. The protein is Mu-theraphotoxin-Hhn2i of Cyriopagopus hainanus (Chinese bird spider).